A 335-amino-acid polypeptide reads, in one-letter code: Nucleoid-associated protein YejK (335 aa).

It belongs to the YejK family.

Its subcellular location is the cytoplasm. The protein resides in the nucleoid. In Shigella sonnei (strain Ss046), this protein is Nucleoid-associated protein YejK.